Consider the following 187-residue polypeptide: UPF0398 protein MW1336 (187 aa).

The protein belongs to the UPF0398 family.

This chain is UPF0398 protein MW1336, found in Staphylococcus aureus (strain MW2).